Here is a 444-residue protein sequence, read N- to C-terminus: MPILIVAVGVLILLFLIIKVKLNTFVSLIVVSFLVAIGLGMDINKIVLSIETGIGGQLGHLALVFGLGAMLGRLVSDAGGGYRIAITLIDKFGRKRIQAAVVVASFIIGIALFFEVGLVLLIPIVYAIAKELKMPFLYLGIPMAAALNVTHGFLPPHPAPTAISVAYGAHIGQVLLFGIIIAVPTTVIAGPLFNKFAMKRFPGAYQKHGNLSGLGPRKEFQLDETPGFAISAVTSLFPVIFMAMATIFSLLLSEHSKGKDIIEFIGTPGTAMLISLLLALYTMGYARKISMQEIGRSISESISQIAMMLLIIGGGGAFKQVLIDGGVGDYVADFFRQTNMSPLFVAWTIAAVLRLCLGSATVAALTTAGMAAPLMEAGSVNPALMVLATGAGSVIACHVNDAGFWMVKEFFGLSMKETFQTWTLLTTVLSVTGLGCVLLAGLVM.

12 helical membrane-spanning segments follow: residues 2–22 (PILI…KVKL), 24–44 (TFVS…MDIN), 52–72 (TGIG…AMLG), 106–126 (FIIG…PIVY), 134–154 (MPFL…HGFL), 174–194 (VLLF…PLFN), 228–248 (FAIS…ATIF), 261–281 (IIEF…LALY), 305–325 (IAMM…LIDG), 343–363 (LFVA…ATVA), 377–397 (AGSV…VIAC), and 424–444 (LLTT…GLVM).

This sequence belongs to the GntP permease family.

It is found in the cell membrane. This is an uncharacterized protein from Bacillus subtilis (strain 168).